We begin with the raw amino-acid sequence, 361 residues long: Chorismate synthase (361 aa).

NADP(+) is bound by residues Arg-48 and Arg-54. FMN contacts are provided by residues 125–127, 238–239, Gly-278, 293–297, and Arg-319; these read RSS, NA, and KPTSS.

It belongs to the chorismate synthase family. In terms of assembly, homotetramer. It depends on FMNH2 as a cofactor.

It catalyses the reaction 5-O-(1-carboxyvinyl)-3-phosphoshikimate = chorismate + phosphate. Its pathway is metabolic intermediate biosynthesis; chorismate biosynthesis; chorismate from D-erythrose 4-phosphate and phosphoenolpyruvate: step 7/7. In terms of biological role, catalyzes the anti-1,4-elimination of the C-3 phosphate and the C-6 proR hydrogen from 5-enolpyruvylshikimate-3-phosphate (EPSP) to yield chorismate, which is the branch point compound that serves as the starting substrate for the three terminal pathways of aromatic amino acid biosynthesis. This reaction introduces a second double bond into the aromatic ring system. In Vibrio parahaemolyticus serotype O3:K6 (strain RIMD 2210633), this protein is Chorismate synthase.